Consider the following 390-residue polypeptide: 5-hydroxytryptamine receptor 1B (390 aa).

A disordered region spans residues 1-21 (MEETGAQCAPPPPAGSQTGVS). At 1–46 (MEETGAQCAPPPPAGSQTGVSQVNLSAAPSHNCSTEGYVYQDSVAL) the chain is on the extracellular side. 2 N-linked (GlcNAc...) asparagine glycosylation sites follow: Asn24 and Asn32. Residues 47 to 72 (PWKVLLVVLLALITLATTLSNAFVIA) form a helical membrane-spanning segment. At 73 to 86 (TVYRTRKLHTPANY) the chain is on the cytoplasmic side. A helical membrane pass occupies residues 87–111 (LIASLAVTDLLVSILVMPISTMYVV). The Extracellular segment spans residues 112 to 119 (TGRWTLGQ). The helical transmembrane segment at 120 to 145 (VVCDFWLSSDITCCTASILHLCVIAL) threads the bilayer. A disulfide bridge links Cys122 with Cys199. Ergotamine is bound by residues Asp129 and Thr134. Residues 146-148 (DRY) carry the DRY motif; important for ligand-induced conformation changes and signaling motif. Over 146-165 (DRYWAITDAVEYSAKRTPKR) the chain is Cytoplasmic. The helical transmembrane segment at 166–184 (AAVMIALVWVFSISISLPP) threads the bilayer. At 185 to 205 (FFWRQAKAEEEVLDCLVNTDH) the chain is on the extracellular side. Val201 contributes to the ergotamine binding site. The helical transmembrane segment at 206-229 (ILYTVYSTVGAFYFPTLLLIALYS) threads the bilayer. Topologically, residues 230 to 315 (RIYVEARSRI…AARERKATKT (86 aa)) are cytoplasmic. The disordered stretch occupies residues 251 to 282 (LTRAQLMTDSPGSTSSVTSINSRAPDVPSESG). Residues 255-272 (QLMTDSPGSTSSVTSINS) are compositionally biased toward polar residues. A helical transmembrane segment spans residues 316–337 (LGIILGAFIVCWLPFFIISLVM). At 338 to 347 (PICKDACWFH) the chain is on the extracellular side. The helical transmembrane segment at 348 to 370 (LAIFDFFTWLGYLNSLINPIIYT) threads the bilayer. An NPxxY motif; important for ligand-induced conformation changes and signaling motif is present at residues 365–369 (NPIIY). Topologically, residues 371 to 390 (MSNEDFKQAFHKLIRFKCAS) are cytoplasmic. Cys388 carries the S-palmitoyl cysteine lipid modification.

The protein belongs to the G-protein coupled receptor 1 family. In terms of assembly, homodimer. Heterodimer with HTR1D. Post-translationally, phosphorylated. Desensitization of the receptor may be mediated by its phosphorylation. Palmitoylated.

Its subcellular location is the cell membrane. In terms of biological role, G-protein coupled receptor for 5-hydroxytryptamine (serotonin). Also functions as a receptor for ergot alkaloid derivatives, various anxiolytic and antidepressant drugs and other psychoactive substances, such as lysergic acid diethylamide (LSD). Ligand binding causes a conformation change that triggers signaling via guanine nucleotide-binding proteins (G proteins) and modulates the activity of downstream effectors, such as adenylate cyclase. HTR1B is coupled to G(i)/G(o) G alpha proteins and mediates inhibitory neurotransmission by inhibiting adenylate cyclase activity. Arrestin family members inhibit signaling via G proteins and mediate activation of alternative signaling pathways. Regulates the release of 5-hydroxytryptamine, dopamine and acetylcholine in the brain, and thereby affects neural activity, nociceptive processing, pain perception, mood and behavior. Besides, plays a role in vasoconstriction of cerebral arteries. The chain is 5-hydroxytryptamine receptor 1B (HTR1B) from Equus caballus (Horse).